The sequence spans 838 residues: Polyribonucleotide nucleotidyltransferase (838 aa).

Residues Asp494 and Asp500 each contribute to the Mg(2+) site. Residues 561 to 620 (PRMESMLIDKGKIKNVIGAGGKNVREICEKTGAKIEISQDGTVMIYAVGREAIESAKDMI) enclose the KH domain. One can recognise an S1 motif domain in the interval 630–697 (GKIYSGEVCE…DKDHIQLSMR (68 aa)). Positions 747–757 (GGASAGRNGRG) are enriched in gly residues. Positions 747–838 (GGASAGRNGR…PAAPKKPRFF (92 aa)) are disordered. Residues 788–810 (AGSSGYSSDSSSGNTKSSSSESS) show a composition bias toward low complexity. Positions 811 to 820 (GGTGGRGRNG) are enriched in gly residues.

This sequence belongs to the polyribonucleotide nucleotidyltransferase family. Mg(2+) serves as cofactor.

The protein localises to the cytoplasm. The catalysed reaction is RNA(n+1) + phosphate = RNA(n) + a ribonucleoside 5'-diphosphate. Functionally, involved in mRNA degradation. Catalyzes the phosphorolysis of single-stranded polyribonucleotides processively in the 3'- to 5'-direction. The polypeptide is Polyribonucleotide nucleotidyltransferase (Anaplasma phagocytophilum (strain HZ)).